Consider the following 134-residue polypeptide: Small ribosomal subunit protein uS9 (134 aa).

Residues 113–134 (REVERKKYGLKKARRAPQFSKR) form a disordered region. Residues 120–134 (YGLKKARRAPQFSKR) are compositionally biased toward basic residues.

This sequence belongs to the universal ribosomal protein uS9 family.

This is Small ribosomal subunit protein uS9 from Thermotoga petrophila (strain ATCC BAA-488 / DSM 13995 / JCM 10881 / RKU-1).